A 757-amino-acid chain; its full sequence is POU domain, class 2, transcription factor 1 (757 aa).

Disordered stretches follow at residues 1 to 43 (MKLH…QTNG), 271 to 295 (AATPVQQLPQSQTTPKRIDTPSLEE), 375 to 398 (SLSNQSVLNSPGHGMEGLNRRRKK), and 532 to 574 (VSSV…TSPL). Composition is skewed to polar residues over residues 19-43 (RMNNPSETSKSSESGDGNTGTQTNG) and 275-285 (VQQLPQSQTTP). The region spanning 294 to 368 (EEPSDLEELE…LLEKWLNDAE (75 aa)) is the POU-specific domain. Positions 395 to 454 (RRKKRTSIETNIRVALEKSFLENQKPTSEEITMIADQLNMEKEVIRVWFCNRRQKEKRIN) form a DNA-binding region, homeobox.

Belongs to the POU transcription factor family. Class-2 subfamily.

It localises to the cytoplasm. The protein localises to the nucleus. Functionally, transcription factor that binds to the octamer motif (5'-ATTTGCAT-3') and activates the promoters of the genes for some small nuclear RNAs (snRNA) and histone H2B. Acts downstream of Notch signaling during radial glia formation. Regulates apoptosis, possibly via an FGF-signaling pathway. The polypeptide is POU domain, class 2, transcription factor 1 (Xenopus tropicalis (Western clawed frog)).